The sequence spans 1374 residues: DNA-directed RNA polymerase subunit beta' (1374 aa).

Residues 1–47 (MTSTSPKSRKPSTKTTKSKSKSKSKSKAAKAAAAGASPALARTPPQF) form a disordered region. Residues 7 to 28 (KSRKPSTKTTKSKSKSKSKSKA) show a composition bias toward basic residues. The span at 29 to 39 (AKAAAAGASPA) shows a compositional bias: low complexity. Residues cysteine 258, cysteine 325, cysteine 332, and cysteine 335 each contribute to the Zn(2+) site. The segment at 1344 to 1374 (RPTGENELEEEQLPDPSALEGLQQEGLLTEE) is disordered. Positions 1362-1374 (LEGLQQEGLLTEE) are enriched in low complexity.

Belongs to the RNA polymerase beta' chain family. RpoC2 subfamily. In terms of assembly, in cyanobacteria the RNAP catalytic core is composed of 2 alpha, 1 beta, 1 beta', 1 gamma and 1 omega subunit. When a sigma factor is associated with the core the holoenzyme is formed, which can initiate transcription. Zn(2+) serves as cofactor.

The enzyme catalyses RNA(n) + a ribonucleoside 5'-triphosphate = RNA(n+1) + diphosphate. DNA-dependent RNA polymerase catalyzes the transcription of DNA into RNA using the four ribonucleoside triphosphates as substrates. In Prochlorococcus marinus (strain MIT 9313), this protein is DNA-directed RNA polymerase subunit beta'.